The chain runs to 861 residues: MKLSILEAAALTAASVASAQDDLAYSPPYYPSPWADGHGEWSNAYKRAVDIVSQMTLTEKVNLTTGTGWELERCVGQTGSVPRLGIPSLCLQDSPLGIRMSDYNSAFPAGINVAATWDKTLAYQRGKAMGEEFSDKGIDVQLGPAAGPLGRSPDGGRNWEGFSPDPALTGVLFAETIKGIQDAGVIATAKHYILNEQEHFRQVGEAQGYGFNITETVSSNVDDKTMHELYLWPFADAVRAGVGAVMCSYNQINNSYGCQNSLTLNKLLKAELGFQGFVMSDWSAHHSGVGAALAGLDMSMPGDISFDSGTSFYGTNLTVGVLNGTIPQWRVDDMAVRIMAAYYKVGRDRLWTPPNFSSWTRDEYGFAHFFPSEGAYERVNEFVNVQRDHAQVIRRIGADSVVLLKNDGALPLTGQEKTVGILGEDAGSNPKGANGCSDRGCDKGTLAMAWGSGTANFPYLVTPEQAIQNEVLKGRGNVFAVTDNYDTQQIAAVASQSTVSLVFVNADAGEGYLNVDGNMGDRKNLTLWQNGEEVIKTVTEHCNNTVVVIHSVGPVLIDEWYAHPNVTGILWAGLPGQESGNAIADVLYGRVNPGGKTPFTWGKTRASYGDYLLTEPNNGNGAPQDNFNEGVFIDYRRFDKYNETPIYEFGHGLSYTTFELSGLQVQLINGSSYVPTTGQTSAAQTFGKVEDASSYLYPEGLKRISKFIYPWLNSTDLKASTGDPDYGEPNFEYIPEGATDGSPQPRLPASGGPGGNPGLYEDLFQVSVTITNTGKVAGDEVPQLYVSLGGPNEPKRVLRKFERLHLAPGQQKVWTTTLNRRDLANWDVVAQDWKITPYAKTIFVGTSSRKLPLAGRLPRVQ.

The N-terminal stretch at 1–19 (MKLSILEAAALTAASVASA) is a signal peptide. N-linked (GlcNAc...) asparagine glycans are attached at residues Asn-62, Asn-212, and Asn-253. Asp-281 is an active-site residue. 8 N-linked (GlcNAc...) asparagine glycosylation sites follow: Asn-316, Asn-323, Asn-355, Asn-524, Asn-543, Asn-565, Asn-669, and Asn-713. Positions 735 to 754 (PEGATDGSPQPRLPASGGPG) are disordered.

This sequence belongs to the glycosyl hydrolase 3 family.

The protein localises to the secreted. The catalysed reaction is Hydrolysis of terminal, non-reducing beta-D-glucosyl residues with release of beta-D-glucose.. It participates in glycan metabolism; cellulose degradation. Functionally, beta-glucosidases are one of a number of cellulolytic enzymes involved in the degradation of cellulosic biomass. Catalyzes the last step releasing glucose from the inhibitory cellobiose. The chain is Probable beta-glucosidase A (bglA) from Aspergillus terreus.